A 791-amino-acid chain; its full sequence is Nuclear cap-binding protein subunit 1-A (791 aa).

The interval 1 to 24 (MSRRRHSDENDGGQAHKRRKTSEP) is disordered. In terms of domain architecture, MIF4G spans 28–240 (EDRLESLICR…CLWAQIQKLK (213 aa)). The stretch at 641 to 714 (LHSTIRKMNK…SEQKNLFLVI (74 aa)) forms a coiled coil. The tract at residues 664–687 (QRLAKQHKHRDSDDNDEDSGRKDG) is disordered.

It belongs to the NCBP1 family. Component of the nuclear cap-binding complex (CBC), a heterodimer composed of ncbp1/cbp80 and ncbp2/cbp20 that interacts with m7GpppG-capped RNA. Component of an alternative nuclear cap-binding complex (CBC) composed of ncbp1/cbp80 and ncbp3.

The protein resides in the nucleus. Its subcellular location is the cytoplasm. Functionally, component of the cap-binding complex (CBC), which binds cotranscriptionally to the 5'-cap of pre-mRNAs and is involved in various processes such as pre-mRNA splicing, translation regulation, nonsense-mediated mRNA decay, RNA-mediated gene silencing (RNAi) by microRNAs (miRNAs) and mRNA export. The CBC complex is involved in mRNA export from the nucleus, leading to the recruitment of the mRNA export machinery to the 5'-end of mRNA and to mRNA export in a 5' to 3' direction through the nuclear pore. The CBC complex is also involved in mediating U snRNA and intronless mRNAs export from the nucleus. The CBC complex is essential for a pioneer round of mRNA translation, before steady state translation when the CBC complex is replaced by cytoplasmic cap-binding protein eIF4E. The pioneer round of mRNA translation mediated by the CBC complex plays a central role in nonsense-mediated mRNA decay (NMD), NMD only taking place in mRNAs bound to the CBC complex, but not on eIF4E-bound mRNAs. The CBC complex enhances NMD in mRNAs containing at least one exon-junction complex (EJC), promoting the interaction between UPF1 and UPF2. The CBC complex is also involved in 'failsafe' NMD, which is independent of the EJC complex, while it does not participate in Staufen-mediated mRNA decay (SMD). During cell proliferation, the CBC complex is also involved in microRNAs (miRNAs) biogenesis via its interaction with SRRT/ARS2 and is required for miRNA-mediated RNA interference. The CBC complex also acts as a negative regulator of parn, thereby acting as an inhibitor of mRNA deadenylation. In the CBC complex, NCBP1/CBP80 does not bind directly capped RNAs (m7GpppG-capped RNA) but is required to stabilize the movement of the N-terminal loop of NCBP2/CBP20 and lock the CBC into a high affinity cap-binding state with the cap structure. Associates with NCBP3 to form an alternative cap-binding complex (CBC) which plays a key role in mRNA export. The conventional CBC with NCBP2 binds both small nuclear RNA (snRNA) and messenger (mRNA) and is involved in their export from the nucleus whereas the alternative CBC with NCBP3 does not bind snRNA and associates only with mRNA thereby playing a role only in mRNA export. The polypeptide is Nuclear cap-binding protein subunit 1-A (ncbp1-a) (Xenopus laevis (African clawed frog)).